Consider the following 499-residue polypeptide: C2H2-type transcription factor RPN4 (499 aa).

Positions 329–397 (QTTKKDNSKP…TTKSTHTHSK (69 aa)) are disordered. A compositionally biased stretch (basic and acidic residues) spans 331-344 (TKKDNSKPVEKTVV). The segment covering 345 to 363 (EKTSSVTKAGSNHSRSTLA) has biased composition (polar residues). A C2H2-type zinc finger spans residues 405-436 (FVCELVNSVTNEVCGAQFSRTYDLTRHQNTIH).

Its subcellular location is the nucleus. Its function is as follows. Transcription factor that acts as a transcriptional activator of a number of genes encoding proteasomal subunits. Plays a role in ergosterol and plasma membrane homeostasis, and subsequent azole resistance. Regulates the expression of 212 genes, activating 80 genes and repressing, likely in an indirect fashion, 132 genes. Targets comprise several proteasome and ergosterol biosynthesis genes, including ERG1, ERG2, ERG3, and ERG11. Directly regulates ERG11 expression through the 3'-TTGCAAA-5' binding motif. The chain is C2H2-type transcription factor RPN4 from Candida glabrata (strain ATCC 2001 / BCRC 20586 / JCM 3761 / NBRC 0622 / NRRL Y-65 / CBS 138) (Yeast).